The sequence spans 567 residues: Asparagine--tRNA ligase, chloroplastic/mitochondrial (567 aa).

Residues 113–191 (NIMGWVRTLR…VELKVEKIIV (79 aa)) constitute a DNA-binding region (OB).

This sequence belongs to the class-II aminoacyl-tRNA synthetase family.

It localises to the plastid. It is found in the chloroplast. Its subcellular location is the mitochondrion. It catalyses the reaction tRNA(Asn) + L-asparagine + ATP = L-asparaginyl-tRNA(Asn) + AMP + diphosphate + H(+). The chain is Asparagine--tRNA ligase, chloroplastic/mitochondrial from Arabidopsis thaliana (Mouse-ear cress).